The sequence spans 1031 residues: Toll-like receptor 9 (1031 aa).

An N-terminal signal peptide occupies residues 1 to 25 (MGPCHGALQPLSLLVQAAMLAVALA). Topologically, residues 26–817 (QGTLPPFLPC…LCLDESLSWD (792 aa)) are extracellular. Cysteine 35 and cysteine 45 are disulfide-bonded. 47–51 (WLFLK) serves as a coordination point for DNA. LRR repeat units follow at residues 62–85 (RDNVTSLSLLSNRIHHLHDSDFAQ), 87–110 (SNLQKLNLKWNCPPAGLSPMHFPC), 122–147 (VPTLEELNLSYNGITTVPALPSSLVS), 150–166 (LSRTNILQLDPTSLTGL), 167–190 (HALRFLYMDGNCYYKNPCGRALEV), 198–221 (LGNLTHLSLKYNNLTTVPRSLPPS), 223–242 (EYLLLSYNHIVTLAPEDLAN), 243–268 (LTALRVLDVGGNCRRCDHARNPCVEC), 283–306 (LSRLEGLVLKDSSLYQLNPRWFRG), 308–332 (GNLTVLDLSENFLYDCITKTKAFQG), 333–356 (LAQLRRLNLSFNYHKKVSFAHLTL), 363–386 (LLSLQELDMHGIFFRSLSQKTLQP), 390–413 (LPMLQRLYLQMNFINQAQLGIFKD), 414–438 (FPGLRYIDLSDNRISGAVEPVATTG), 470–494 (CKNLSFTLDLSRNNLVTVQPEMFAQ), 496–519 (SRLQCLRLSHNSISQAVNGSQFVP), 520–543 (LTSLQVLDLSHNKLDLYHGRSFTE), 545–567 (PRLEALDLSYNSQPFSMRGVGHN), 574–598 (LPTLRYLSLAHNGIHSRVSQQLCST), 600–622 (LWALDFSGNSLSQMWAEGDLYLR), 627–650 (LRSLIRLDLSQNRLHTLLPCTLGN), 652–675 (PKSLQLLRLRNNYLAFFNWSSLTL), 676–699 (LPNLETLDLAGNQLKALSNGSLPS), 701–723 (TQLQRLDVSRNSIIFVVPGFFAL), 724–747 (ATRLRELNLSANALRTVEPSWFGF), and 749–772 (AGSLEVLDVSANPLHCACGAAFVD). An N-linked (GlcNAc...) asparagine glycan is attached at asparagine 64. DNA contacts are provided by residues 72-77 (SNRIHH) and 95-109 (KWNCPPAGLSPMHFP). Cysteine 98 and cysteine 110 are oxidised to a cystine. N-linked (GlcNAc...) asparagine glycosylation occurs at asparagine 129. DNA-binding positions include tyrosine 132, arginine 152, and 179–181 (YYK). A disulfide bond links cysteine 178 and cysteine 184. N-linked (GlcNAc...) asparagine glycosylation is present at asparagine 200. Residue tyrosine 208 coordinates DNA. Asparagine 210 and asparagine 242 each carry an N-linked (GlcNAc...) asparagine glycan. 2 disulfides stabilise this stretch: cysteine 255-cysteine 268 and cysteine 258-cysteine 265. Residue cysteine 258 is the site of S-palmitoyl cysteine attachment. Residue arginine 262 participates in DNA binding. Cysteine 265 is lipidated: S-palmitoyl cysteine. N-linked (GlcNAc...) asparagine glycans are attached at residues asparagine 309 and asparagine 340. Cysteine 470 and cysteine 500 form a disulfide bridge. N-linked (GlcNAc...) asparagine glycosylation is found at asparagine 472 and asparagine 513. A glycan (N-linked (GlcNAc...) asparagine) is linked at asparagine 567. N-linked (GlcNAc...) asparagine glycans are attached at residues asparagine 669 and asparagine 694. N-linked (GlcNAc...) asparagine glycosylation occurs at asparagine 731. 2 disulfides stabilise this stretch: cysteine 764-cysteine 790 and cysteine 766-cysteine 809. The chain crosses the membrane as a helical span at residues 818-838 (CFGLSLLVVALGLAMPMLHHL). Over 839–1031 (CGWDLWYCFH…NFCRGPTMAE (193 aa)) the chain is Cytoplasmic. One can recognise a TIR domain in the interval 866 to 1011 (LSYDAFVVFD…SFWAQLGMAL (146 aa)).

Belongs to the Toll-like receptor family. As to quaternary structure, monomer and homodimer. Exists as a monomer in the absence of unmethylated cytidine-phosphate-guanosine (CpG) ligand. Proteolytic processing of an insertion loop (Z-loop) is required for homodimerization upon binding to the unmethylated CpG ligand leading to its activation. Interacts with MYD88 via their respective TIR domains. Interacts with BTK. Interacts (via transmembrane domain) with UNC93B1. Interacts with CD300LH; the interaction may promote full activation of TLR9-triggered innate responses. Interacts with CNPY3 and HSP90B1; this interaction is required for proper folding in the endoplasmic reticulum. Interacts with SMPDL3B. Interacts with CD82; this interaction is essential for TLR9-dependent myddosome formation in response to CpG stimulation. Post-translationally, activated by proteolytic cleavage of the flexible loop between repeats LRR14 and LRR15 within the ectodomain. Cleavage requires UNC93B1. Proteolytically processed by first removing the majority of the ectodomain by either asparagine endopeptidase (AEP) or a cathepsin followed by a trimming event that is solely cathepsin mediated and required for optimal receptor signaling. Palmitoylated by ZDHHC3 in the Golgi regulates TLR9 trafficking from the Golgi to endosomes. Depalmitoylation by PPT1 controls the release of TLR9 from UNC93B1 in endosomes. In terms of tissue distribution, expressed in airway epithelium, vascular endothelium and inflammatory cells in blood vessels of the lungs (at protein level). Highly expressed in pulmonary intravascular macrophages (PIMs) and to a lesser extent in alveolar macrophages, neutrophiles, type-II alveolar epithelial cells and bronchial epithelial cells of the lungs (at protein level). High constitutive intracellular expression in leukocytes including polymorphonuclear leukocytes (PMNs), CD4 and CD8 T cells (at protein level). Expressed throughout the respiratory tract including larynx, upper, middle and lower trachea, and bronchus in isolated equine respiratory epithelial cells (ERECs) and in fully differentiated ERECs cultured at the air-fluid interface (AFI) (at protein level). Constitutively expressed in peripheral blood mononuclear cells (PBMCs), lymph nodes and spleen. The level of expression in PBMCs is about 2- to 3-fold higher than that in lymph nodes and spleen. Very low expression in liver, heart, lung, kidney, small intestine, colon and stomach. Low expression in the airway tissue epithelium of the larynx, upper trachea, middle tranchea, lower trachea, bronchus and spleen, and more abundant expression in mesenteric lymph node. Not expressed in fully differentiated bronchus epithelial cells cultured at the AFI for four weeks. Expressed in gingival tissue.

The protein localises to the endoplasmic reticulum membrane. It localises to the endosome. The protein resides in the lysosome. It is found in the cytoplasmic vesicle. Its subcellular location is the phagosome. The protein localises to the cell membrane. It localises to the cytoplasm. The protein resides in the nucleus. Key component of innate and adaptive immunity. TLRs (Toll-like receptors) control host immune response against pathogens through recognition of molecular patterns specific to microorganisms. TLR9 is a nucleotide-sensing TLR which is activated by unmethylated cytidine-phosphate-guanosine (CpG) dinucleotides. Acts via MYD88 and TRAF6, leading to NF-kappa-B activation, cytokine secretion and the inflammatory response. Upon CpG stimulation, induces B-cell proliferation, activation, survival and antibody production. The sequence is that of Toll-like receptor 9 from Equus caballus (Horse).